Here is a 501-residue protein sequence, read N- to C-terminus: Aspartyl/glutamyl-tRNA(Asn/Gln) amidotransferase subunit B (501 aa).

Belongs to the GatB/GatE family. GatB subfamily. As to quaternary structure, heterotrimer of A, B and C subunits.

It carries out the reaction L-glutamyl-tRNA(Gln) + L-glutamine + ATP + H2O = L-glutaminyl-tRNA(Gln) + L-glutamate + ADP + phosphate + H(+). It catalyses the reaction L-aspartyl-tRNA(Asn) + L-glutamine + ATP + H2O = L-asparaginyl-tRNA(Asn) + L-glutamate + ADP + phosphate + 2 H(+). Allows the formation of correctly charged Asn-tRNA(Asn) or Gln-tRNA(Gln) through the transamidation of misacylated Asp-tRNA(Asn) or Glu-tRNA(Gln) in organisms which lack either or both of asparaginyl-tRNA or glutaminyl-tRNA synthetases. The reaction takes place in the presence of glutamine and ATP through an activated phospho-Asp-tRNA(Asn) or phospho-Glu-tRNA(Gln). This is Aspartyl/glutamyl-tRNA(Asn/Gln) amidotransferase subunit B from Mycobacterium sp. (strain KMS).